A 108-amino-acid chain; its full sequence is UPF0145 protein LACR_1006 (108 aa).

The protein belongs to the UPF0145 family.

In Lactococcus lactis subsp. cremoris (strain SK11), this protein is UPF0145 protein LACR_1006.